We begin with the raw amino-acid sequence, 188 residues long: Probable manganese efflux pump MntP (188 aa).

Transmembrane regions (helical) follow at residues Ile-3–Gly-23, Leu-66–Ile-86, Trp-106–Phe-128, Ala-143–Gly-163, and Ile-168–Gly-188.

The protein belongs to the MntP (TC 9.B.29) family.

The protein localises to the cell inner membrane. Its function is as follows. Probably functions as a manganese efflux pump. The protein is Probable manganese efflux pump MntP of Shigella flexneri serotype 5b (strain 8401).